A 301-amino-acid chain; its full sequence is Probable enoyl-CoA hydratase 2, mitochondrial (301 aa).

The N-terminal 32 residues, 1–32, are a transit peptide targeting the mitochondrion; sequence MSFVKYLRRDNLLQLAGKPSLSRNYILQTCRT. Substrate is bound by residues 105-109 and Gly152; that span reads AGADL.

It belongs to the enoyl-CoA hydratase/isomerase family.

The protein resides in the mitochondrion. The catalysed reaction is a (3S)-3-hydroxyacyl-CoA = a (2E)-enoyl-CoA + H2O. It carries out the reaction a 4-saturated-(3S)-3-hydroxyacyl-CoA = a (3E)-enoyl-CoA + H2O. It functions in the pathway lipid metabolism; fatty acid beta-oxidation. Straight-chain enoyl-CoA thioesters from C4 up to at least C16 are processed, although with decreasing catalytic rate. The protein is Probable enoyl-CoA hydratase 2, mitochondrial of Arabidopsis thaliana (Mouse-ear cress).